The primary structure comprises 183 residues: Shikimate kinase (183 aa).

25–30 lines the ATP pocket; the sequence is GAGKTT. Residue Thr-29 coordinates Mg(2+). Residues Asp-47, Arg-71, and Gly-93 each coordinate substrate. ATP is bound at residue Arg-131. A substrate-binding site is contributed by Arg-150.

This sequence belongs to the shikimate kinase family. Monomer. The cofactor is Mg(2+).

It localises to the cytoplasm. The catalysed reaction is shikimate + ATP = 3-phosphoshikimate + ADP + H(+). It participates in metabolic intermediate biosynthesis; chorismate biosynthesis; chorismate from D-erythrose 4-phosphate and phosphoenolpyruvate: step 5/7. Catalyzes the specific phosphorylation of the 3-hydroxyl group of shikimic acid using ATP as a cosubstrate. The protein is Shikimate kinase of Dechloromonas aromatica (strain RCB).